A 735-amino-acid chain; its full sequence is Nuclear intron maturase 2, mitochondrial (735 aa).

The N-terminal 12 residues, 1–12 (MRRSFSVLGPYK), are a transit peptide targeting the mitochondrion. The 300-residue stretch at 161 to 460 (RDKTDYESLS…KGIMFLDHVL (300 aa)) folds into the Reverse transcriptase domain. Residues 485–653 (GTLLSVTASL…KFLIEYLTLD (169 aa)) form an intron maturase type-2 region. The tract at residues 707-735 (SSTYNRDNDDQKNKEEDEDSEDGLRIARM) is disordered. The segment covering 712–721 (RDNDDQKNKE) has biased composition (basic and acidic residues).

Belongs to the plant nuclear intron maturase (nMat) family. Associated to a large ribonucleoprotein complex in mitochondria containing group-II intron RNAs.

The protein localises to the mitochondrion. Functionally, nuclear-encoded maturase required for splicing of group-II introns in mitochondria. Involved in the splicing of mitochondrial COX2, NAD1 and NAD7 transcripts. Necessary for mitochondrial biogenesis during early developmental stages. The polypeptide is Nuclear intron maturase 2, mitochondrial (Arabidopsis thaliana (Mouse-ear cress)).